The primary structure comprises 502 residues: Glycerol kinase (502 aa).

Residue threonine 14 participates in ADP binding. Residues threonine 14, threonine 15, and serine 16 each contribute to the ATP site. Threonine 14 provides a ligand contact to sn-glycerol 3-phosphate. Arginine 18 contacts ADP. Sn-glycerol 3-phosphate-binding residues include arginine 84, glutamate 85, tyrosine 136, and aspartate 246. Glycerol is bound by residues arginine 84, glutamate 85, tyrosine 136, aspartate 246, and glutamine 247. The ADP site is built by threonine 268 and glycine 311. Residues threonine 268, glycine 311, glutamine 315, and glycine 412 each contribute to the ATP site. Glycine 412 and asparagine 416 together coordinate ADP.

Belongs to the FGGY kinase family. As to quaternary structure, homotetramer and homodimer (in equilibrium). Heterodimer with EIIA-Glc. Binds 1 zinc ion per glycerol kinase EIIA-Glc dimer. The zinc ion is important for dimerization.

It catalyses the reaction glycerol + ATP = sn-glycerol 3-phosphate + ADP + H(+). The protein operates within polyol metabolism; glycerol degradation via glycerol kinase pathway; sn-glycerol 3-phosphate from glycerol: step 1/1. Its activity is regulated as follows. Activity of this regulatory enzyme is affected by several metabolites. Allosterically and non-competitively inhibited by fructose 1,6-bisphosphate (FBP) and unphosphorylated phosphocarrier protein EIIA-Glc (III-Glc), an integral component of the bacterial phosphotransferase (PTS) system. Its function is as follows. Key enzyme in the regulation of glycerol uptake and metabolism. Catalyzes the phosphorylation of glycerol to yield sn-glycerol 3-phosphate. This Citrobacter koseri (strain ATCC BAA-895 / CDC 4225-83 / SGSC4696) protein is Glycerol kinase.